A 143-amino-acid polypeptide reads, in one-letter code: Large-conductance mechanosensitive channel (143 aa).

2 helical membrane-spanning segments follow: residues 19 to 39 (VGVI…ADVI) and 81 to 101 (GSFL…FLVV).

It belongs to the MscL family. Homopentamer.

The protein localises to the cell inner membrane. Channel that opens in response to stretch forces in the membrane lipid bilayer. May participate in the regulation of osmotic pressure changes within the cell. This is Large-conductance mechanosensitive channel from Rhodopseudomonas palustris (strain HaA2).